The following is a 98-amino-acid chain: MSSIYMNILLAFTMALLGLLMYRSHLMSSLLCLEGMMLSLFILSTVTMLNTSFTLSSMMPVMLMVFAACEAAVGLALLVTVSNTYGLDYVQNLNLLQC.

A run of 3 helical transmembrane segments spans residues 1 to 21 (MSSIYMNILLAFTMALLGLLM), 29 to 49 (SLLCLEGMMLSLFILSTVTML), and 61 to 81 (VMLMVFAACEAAVGLALLVTV).

It belongs to the complex I subunit 4L family. In terms of assembly, core subunit of respiratory chain NADH dehydrogenase (Complex I) which is composed of 45 different subunits.

Its subcellular location is the mitochondrion inner membrane. It catalyses the reaction a ubiquinone + NADH + 5 H(+)(in) = a ubiquinol + NAD(+) + 4 H(+)(out). Core subunit of the mitochondrial membrane respiratory chain NADH dehydrogenase (Complex I) which catalyzes electron transfer from NADH through the respiratory chain, using ubiquinone as an electron acceptor. Part of the enzyme membrane arm which is embedded in the lipid bilayer and involved in proton translocation. The sequence is that of NADH-ubiquinone oxidoreductase chain 4L (MT-ND4L) from Tamandua tetradactyla (Southern anteater).